The primary structure comprises 471 residues: ATP synthase subunit beta (471 aa).

Residue 153–160 (GGAGVGKT) participates in ATP binding.

Belongs to the ATPase alpha/beta chains family. F-type ATPases have 2 components, CF(1) - the catalytic core - and CF(0) - the membrane proton channel. CF(1) has five subunits: alpha(3), beta(3), gamma(1), delta(1), epsilon(1). CF(0) has four main subunits: a(1), b(1), b'(1) and c(9-12).

It localises to the cell membrane. It catalyses the reaction ATP + H2O + 4 H(+)(in) = ADP + phosphate + 5 H(+)(out). Its function is as follows. Produces ATP from ADP in the presence of a proton gradient across the membrane. The catalytic sites are hosted primarily by the beta subunits. The chain is ATP synthase subunit beta from Chloroflexus aurantiacus (strain ATCC 29364 / DSM 637 / Y-400-fl).